Consider the following 281-residue polypeptide: Nhr-229 coiled coil domain containing nccd-1 (281 aa).

The chain is Nhr-229 coiled coil domain containing nccd-1 from Caenorhabditis elegans.